Consider the following 407-residue polypeptide: Phosphopentomutase (407 aa).

Residues D10, D307, H312, D348, H349, and H360 each coordinate Mn(2+).

It belongs to the phosphopentomutase family. Mn(2+) serves as cofactor.

The protein localises to the cytoplasm. It carries out the reaction 2-deoxy-alpha-D-ribose 1-phosphate = 2-deoxy-D-ribose 5-phosphate. The enzyme catalyses alpha-D-ribose 1-phosphate = D-ribose 5-phosphate. It participates in carbohydrate degradation; 2-deoxy-D-ribose 1-phosphate degradation; D-glyceraldehyde 3-phosphate and acetaldehyde from 2-deoxy-alpha-D-ribose 1-phosphate: step 1/2. Functionally, isomerase that catalyzes the conversion of deoxy-ribose 1-phosphate (dRib-1-P) and ribose 1-phosphate (Rib-1-P) to deoxy-ribose 5-phosphate (dRib-5-P) and ribose 5-phosphate (Rib-5-P), respectively. In Methylobacterium nodulans (strain LMG 21967 / CNCM I-2342 / ORS 2060), this protein is Phosphopentomutase.